The chain runs to 926 residues: Serine/threonine-protein kinase pakE (926 aa).

Polar residues predominate over residues 36–55; sequence SSRELPTQDSSTKTSNITTP. Disordered stretches follow at residues 36–257 and 546–576; these read SSRE…RPKL and QLNN…TTTT. Residues 56 to 107 are compositionally biased toward low complexity; it reads NNNNNNNNNNNNNNNNNNNNNNNNNNNNNNNNNNNNNNNNNNNNNNNNNNNN. Over residues 108–117 the composition is skewed to polar residues; sequence TPTSLNSSWK. The segment covering 134–173 has biased composition (low complexity); it reads NNNNNVGSPNNQSTSQTNHQQPPPQQLQQQQSLSSTSTPS. A compositionally biased stretch (polar residues) spans 183 to 204; sequence RRNVTSPNLTRSDPTVPITNSR. Over residues 215 to 253 the composition is skewed to low complexity; the sequence is PQFQLNNLNFDDNNDHSTTTTNNNNNNNNNNSNNNNNNN. Positions 534 to 567 form a coiled coil; the sequence is LDFEKELKENQQQLNNNNNNNNNNNNNNNNNNNN. The 254-residue stretch at 650 to 903 folds into the Protein kinase domain; the sequence is FEFKEKLGQG…VIDLLSHDFI (254 aa). Residues 656–664 and Lys-679 each bind ATP; that span reads LGQGGYGAV. The Proton acceptor role is filled by Asp-771.

This sequence belongs to the protein kinase superfamily. STE Ser/Thr protein kinase family. STE20 subfamily. The cofactor is Mg(2+).

It carries out the reaction L-seryl-[protein] + ATP = O-phospho-L-seryl-[protein] + ADP + H(+). The catalysed reaction is L-threonyl-[protein] + ATP = O-phospho-L-threonyl-[protein] + ADP + H(+). May play a role in responding to changes in chemoattractant levels. In Dictyostelium discoideum (Social amoeba), this protein is Serine/threonine-protein kinase pakE.